The following is a 103-amino-acid chain: Putative glutaredoxin-C12 (103 aa).

Residues 1–102 (MERVRDLASE…QMLKASNAIW (102 aa)) form the Glutaredoxin domain. An intrachain disulfide couples C21 to C24.

Belongs to the glutaredoxin family. CC-type subfamily.

The protein localises to the cytoplasm. Has a glutathione-disulfide oxidoreductase activity in the presence of NADPH and glutathione reductase. Reduces low molecular weight disulfides and proteins. In Arabidopsis thaliana (Mouse-ear cress), this protein is Putative glutaredoxin-C12 (GRXC12).